The chain runs to 129 residues: MTATGIAEVIQRYYPDWDPPPDHYEWNKCLCPFHGDETPSAAVSYDLQGFNCLACGVRGDVISIIRHEEEVSFAEAVRIAEGLSVGGNIPVQRKPARKPSRRVFGESRSSGSSGSTVRPGIRGRSTPWS.

The disordered stretch occupies residues 87–129; the sequence is GNIPVQRKPARKPSRRVFGESRSSGSSGSTVRPGIRGRSTPWS. Over residues 106 to 115 the composition is skewed to low complexity; sequence ESRSSGSSGS.

The sequence is that of Gene 58 protein (58) from Mycobacterium (Mycobacteriophage D29).